Here is a 323-residue protein sequence, read N- to C-terminus: Melanocortin receptor 3 (323 aa).

Over 1–37 (MNSSCCLSSVSPMLPNLSEHPAAPPASNRSGSGFCEQ) the chain is Extracellular. 3 N-linked (GlcNAc...) asparagine glycosylation sites follow: Asn-2, Asn-16, and Asn-28. Residues 38-63 (VFIKPEVFLALGIVSLMENILVILAV) traverse the membrane as a helical segment. Residues 64-75 (VRNGNLHSPMYF) lie on the Cytoplasmic side of the membrane. Residues 76 to 100 (FLCSLAAADMLVSLSNSLETIMIAV) traverse the membrane as a helical segment. Residues 101-118 (INSDSLTLEDQFIQHMDN) lie on the Extracellular side of the membrane. The chain crosses the membrane as a helical span at residues 119–140 (IFDSMICISLVASICNLLAIAI). The Cytoplasmic portion of the chain corresponds to 141–160 (DRYVTIFYALRYHSIMTVRK). A helical membrane pass occupies residues 161 to 181 (ALTLIGVIWVCCGICGVMFII). At 182 to 186 (YSESK) the chain is on the extracellular side. A helical transmembrane segment spans residues 187–210 (MVIVCLITMFFAMVLLMGTLYIHM). Residues 211-245 (FLFARLHVQRIAVLPPAGVVAPQQHSCMKGAVTIT) lie on the Cytoplasmic side of the membrane. A helical transmembrane segment spans residues 246 to 268 (ILLGVFIFCWAPFFLHLVLIITC). At 269–277 (PTNPYCICY) the chain is on the extracellular side. Residues 278-301 (TAHFNTYLVLIMCNSVIDPLIYAF) traverse the membrane as a helical segment. The Cytoplasmic segment spans residues 302-323 (RSLELRNTFKEILCGCNSMNLG). Cys-315 carries the S-palmitoyl cysteine lipid modification.

This sequence belongs to the G-protein coupled receptor 1 family. Brain.

It localises to the cell membrane. Receptor for MSH (alpha, beta and gamma) and ACTH. This receptor is mediated by G proteins which activate adenylate cyclase. Required for expression of anticipatory patterns of activity and wakefulness during periods of limited nutrient availability and for the normal regulation of circadian clock activity in the brain. This chain is Melanocortin receptor 3 (Mc3r), found in Mus musculus (Mouse).